Reading from the N-terminus, the 278-residue chain is 4-deoxy-L-threo-5-hexosulose-uronate ketol-isomerase (278 aa).

Histidine 196, histidine 198, glutamate 203, and histidine 245 together coordinate Zn(2+).

It belongs to the KduI family. Homohexamer. It depends on Zn(2+) as a cofactor.

It catalyses the reaction 5-dehydro-4-deoxy-D-glucuronate = 3-deoxy-D-glycero-2,5-hexodiulosonate. Its pathway is glycan metabolism; pectin degradation; 2-dehydro-3-deoxy-D-gluconate from pectin: step 4/5. In terms of biological role, catalyzes the isomerization of 5-dehydro-4-deoxy-D-glucuronate to 3-deoxy-D-glycero-2,5-hexodiulosonate. The sequence is that of 4-deoxy-L-threo-5-hexosulose-uronate ketol-isomerase from Escherichia coli O8 (strain IAI1).